The primary structure comprises 426 residues: Enolase 2 (426 aa).

Glutamine 163 contributes to the (2R)-2-phosphoglycerate binding site. The active-site Proton donor is the glutamate 205. Residues aspartate 242, glutamate 285, and aspartate 312 each coordinate Mg(2+). The (2R)-2-phosphoglycerate site is built by lysine 337, arginine 366, serine 367, and lysine 388. Lysine 337 functions as the Proton acceptor in the catalytic mechanism.

It belongs to the enolase family. Mg(2+) serves as cofactor.

Its subcellular location is the cytoplasm. It is found in the secreted. It localises to the cell surface. The enzyme catalyses (2R)-2-phosphoglycerate = phosphoenolpyruvate + H2O. It participates in carbohydrate degradation; glycolysis; pyruvate from D-glyceraldehyde 3-phosphate: step 4/5. In terms of biological role, catalyzes the reversible conversion of 2-phosphoglycerate (2-PG) into phosphoenolpyruvate (PEP). It is essential for the degradation of carbohydrates via glycolysis. In Methanospirillum hungatei JF-1 (strain ATCC 27890 / DSM 864 / NBRC 100397 / JF-1), this protein is Enolase 2.